Consider the following 622-residue polypeptide: Chaperone protein HscA homolog (622 aa).

Belongs to the heat shock protein 70 family.

Its function is as follows. Chaperone involved in the maturation of iron-sulfur cluster-containing proteins. Has a low intrinsic ATPase activity which is markedly stimulated by HscB. The chain is Chaperone protein HscA homolog from Burkholderia cenocepacia (strain HI2424).